Consider the following 520-residue polypeptide: Hydroxymethylglutaryl-CoA synthase, cytoplasmic (520 aa).

S4 is modified (phosphoserine). Positions 43 and 44 each coordinate (3S)-3-hydroxy-3-methylglutaryl-CoA. 44–46 (AGK) serves as a coordination point for CoA. K46 is subject to N6-acetyllysine. Residue E95 is the Proton donor/acceptor of the active site. C129, N167, T171, S221, and H264 together coordinate (3S)-3-hydroxy-3-methylglutaryl-CoA. Residue C129 is the Acyl-thioester intermediate of the active site. N167 provides a ligand contact to CoA. S221 provides a ligand contact to CoA. H264 acts as the Proton donor/acceptor in catalysis. Positions 269 and 273 each coordinate CoA. Positions 273, 343, and 377 each coordinate (3S)-3-hydroxy-3-methylglutaryl-CoA. K273 carries the post-translational modification N6-acetyllysine. The interval 487–520 (NTATEHIPSPAKKVPRLPATSGEPESAVISNGEH) is disordered. S495 and S516 each carry phosphoserine.

This sequence belongs to the thiolase-like superfamily. HMG-CoA synthase family. Homodimer.

Its subcellular location is the cytoplasm. The catalysed reaction is acetoacetyl-CoA + acetyl-CoA + H2O = (3S)-3-hydroxy-3-methylglutaryl-CoA + CoA + H(+). It participates in metabolic intermediate biosynthesis; (R)-mevalonate biosynthesis; (R)-mevalonate from acetyl-CoA: step 2/3. Functionally, catalyzes the condensation of acetyl-CoA with acetoacetyl-CoA to form HMG-CoA, which is converted by HMG-CoA reductase (HMGCR) into mevalonate, a precursor for cholesterol synthesis. The sequence is that of Hydroxymethylglutaryl-CoA synthase, cytoplasmic from Rattus norvegicus (Rat).